A 408-amino-acid polypeptide reads, in one-letter code: Phosphoglycerate kinase (408 aa).

Substrate-binding positions include Asp24–Asn26, Arg39, His62–Arg65, Arg121, and Arg161. Residues Lys211, Gly307, Glu338, and Gly364–Ser367 each bind ATP.

The protein belongs to the phosphoglycerate kinase family. In terms of assembly, monomer.

The protein localises to the cytoplasm. It catalyses the reaction (2R)-3-phosphoglycerate + ATP = (2R)-3-phospho-glyceroyl phosphate + ADP. It participates in carbohydrate degradation; glycolysis; pyruvate from D-glyceraldehyde 3-phosphate: step 2/5. This chain is Phosphoglycerate kinase, found in Paenarthrobacter aurescens (strain TC1).